Here is an 882-residue protein sequence, read N- to C-terminus: Ubiquitin carboxyl-terminal hydrolase 4 (882 aa).

The 127-residue stretch at 182-308 (YDSSLLLIDV…WVSKKGACET (127 aa)) folds into the Rhodanese domain. Residues 382–399 (KAKSSSTSSVTSSSPAPS) show a composition bias toward low complexity. The segment at 382–411 (KAKSSSTSSVTSSSPAPSQLVRPQTSSMPP) is disordered. Residues 402 to 411 (VRPQTSSMPP) show a composition bias toward polar residues. The region spanning 519–879 (VGLENMGNSC…NAYVLFYHRV (361 aa)) is the USP domain. Cys-528 serves as the catalytic Nucleophile. The active-site Proton acceptor is the His-836.

Belongs to the peptidase C19 family.

It localises to the cytoplasm. The protein resides in the late endosome membrane. It catalyses the reaction Thiol-dependent hydrolysis of ester, thioester, amide, peptide and isopeptide bonds formed by the C-terminal Gly of ubiquitin (a 76-residue protein attached to proteins as an intracellular targeting signal).. Its activity is regulated as follows. RFU1 is an inhibitor of deubiquitination activity. Ubiquitin thioesterase that acts at the late endosome/prevacuolar compartment to recover ubiquitin from ubiquitinated membrane proteins en route to the vacuole. Also removes ubiquitin from soluble proteins targeted to proteasomes. Is essential to maintain a normal level of free ubiquitin. Required for promoting coordination of DNA replication and avoids DNA overreplication. This is Ubiquitin carboxyl-terminal hydrolase 4 (DOA4) from Vanderwaltozyma polyspora (strain ATCC 22028 / DSM 70294 / BCRC 21397 / CBS 2163 / NBRC 10782 / NRRL Y-8283 / UCD 57-17) (Kluyveromyces polysporus).